We begin with the raw amino-acid sequence, 66 residues long: Phylloseptin-S4 (66 aa).

Positions 1-22 (MAFLKKSLFLVLFLGLVSLSIC) are cleaved as a signal peptide. Positions 23–46 (EEEKRETEEEEHDQEEDDKSEEKR) are excised as a propeptide. The disordered stretch occupies residues 25 to 44 (EKRETEEEEHDQEEDDKSEE). The span at 30–41 (EEEEHDQEEDDK) shows a compositional bias: acidic residues. Leucine 65 carries the leucine amide modification.

As to expression, expressed by the skin glands.

Its subcellular location is the secreted. It localises to the target cell membrane. Functionally, antimicrobial peptide with high activity against Gram-positive bacteria, moderate activity against Gram-negative bacteria, and moderate activity against fungi. Acts by causing bacterial membrane disruption inducing leakage of the intracellular content followed by cell death. It adopts an alpha-helical amphipathic structure in membrane environments. Also shows highly potent antiparasitic activity against Leishmania species. Shows moderate hemolytic activity on human erythrocytes (LC(50)=33 uM). Is also active on human monocytes (IC(50)=23 uM). The sequence is that of Phylloseptin-S4 from Phyllomedusa sauvagei (Sauvage's leaf frog).